A 156-amino-acid chain; its full sequence is Ribosome-binding factor A (156 aa).

A compositionally biased stretch (basic and acidic residues) spans 125–138; it reads RVREGAKHAGDPDP. Residues 125-156 form a disordered region; it reads RVREGAKHAGDPDPYRVGGAEDTDGDTDGDER. The span at 145 to 156 shows a compositional bias: acidic residues; it reads EDTDGDTDGDER.

Belongs to the RbfA family. In terms of assembly, monomer. Binds 30S ribosomal subunits, but not 50S ribosomal subunits or 70S ribosomes.

It localises to the cytoplasm. Its function is as follows. One of several proteins that assist in the late maturation steps of the functional core of the 30S ribosomal subunit. Associates with free 30S ribosomal subunits (but not with 30S subunits that are part of 70S ribosomes or polysomes). Required for efficient processing of 16S rRNA. May interact with the 5'-terminal helix region of 16S rRNA. In Mycolicibacterium smegmatis (strain ATCC 700084 / mc(2)155) (Mycobacterium smegmatis), this protein is Ribosome-binding factor A.